A 271-amino-acid polypeptide reads, in one-letter code: MSYLLRKPQSHEVSNGVKLVHEVTTSNSDLTYVEFKVLDLASGSSYTEELKKQEICIVAVTGKITVTDHESTFENIGTRESVFERKPTDSVYISNDRAFEITAVSDARVALCYSPSEKQLPTKLIKAEDNGIEHRGQFSNKRTVHNILPDSDPSANSLLVVEVYTDSGNWSSYPPHKHDQDNLPEESFLEETYYHELDPGQGFVFQRVYTDDRSIDETMTVENENVVIVPAGYHPVGVPDGYTSYYLNVMAGPTRKWKFYNDPAHEWILER.

Belongs to the isomerase IolB family.

The enzyme catalyses 5-deoxy-D-glucuronate = 5-dehydro-2-deoxy-D-gluconate. The protein operates within polyol metabolism; myo-inositol degradation into acetyl-CoA; acetyl-CoA from myo-inositol: step 4/7. Functionally, involved in the isomerization of 5-deoxy-glucuronate (5DG) to 5-dehydro-2-deoxy-D-gluconate (DKG or 2-deoxy-5-keto-D-gluconate). The chain is 5-deoxy-glucuronate isomerase from Bacillus subtilis subsp. natto.